We begin with the raw amino-acid sequence, 156 residues long: Small ribosomal subunit protein uS7 (156 aa).

This sequence belongs to the universal ribosomal protein uS7 family. As to quaternary structure, part of the 30S ribosomal subunit. Contacts proteins S9 and S11.

In terms of biological role, one of the primary rRNA binding proteins, it binds directly to 16S rRNA where it nucleates assembly of the head domain of the 30S subunit. Is located at the subunit interface close to the decoding center, probably blocks exit of the E-site tRNA. This chain is Small ribosomal subunit protein uS7, found in Erythrobacter litoralis (strain HTCC2594).